We begin with the raw amino-acid sequence, 402 residues long: NAD-dependent protein deacetylase sirtuin-7 (402 aa).

Disordered stretches follow at residues 1–25 (MAAGGGLSRSERKAAERVRRLREEQ) and 59–78 (VTELQGRSRRREGLKRRQEE). Residues 9-25 (RSERKAAERVRRLREEQ) show a composition bias toward basic and acidic residues. The region spanning 83-330 (PEELRRKVRE…RLLMDELGLE (248 aa)) is the Deacetylase sirtuin-type domain. Residues 108 to 127 (GAGISTAASIPDYRGPNGVW) and 168 to 171 (QNCD) each bind NAD(+). H188 acts as the Proton acceptor in catalysis. The Zn(2+) site is built by C196, C199, C226, and C229. Residues 269-271 (GSS), 298-300 (NLQ), and C316 contribute to the NAD(+) site. Residues 355 to 385 (SHSRKSLCRSREEPPPGDQSAPLASATPILG) are disordered. Asymmetric dimethylarginine; alternate is present on R390. At R390 the chain carries Omega-N-methylarginine; alternate.

This sequence belongs to the sirtuin family. Class IV subfamily. Interacts with UBTF and the RNA polymerase I complex. Interacts with components of the B-WICH complex, such as MYBBP1A, SMARCA5/SNF2H and BAZ1B/WSTF. Interacts with ELK4, leading to stabilization at target promoters for H3K18Ac deacetylation. Interacts with histone H2A and/or histone H2B. Interacts with DNMT1. Interacts with SIRT1. The cofactor is Zn(2+). In terms of processing, phosphorylated during mitosis. Post-translationally, methylation at Arg-390 by PRMT6 inhibits the H3K18Ac histone deacetylase activity, promoting mitochondria biogenesis and maintaining mitochondria respiration. Ubiquitinated via 'Lys-63'-linked ubiquitin chains. Deubiquitinated by USP7, inhibiting the H3K18Ac histone deacetylase activity and regulating gluconeogenesis. Ubiquitinated by E3 ubiquitin-protein ligase complex containing FBXO7; leading to proteasomal degradation.

Its subcellular location is the nucleus. It is found in the nucleolus. It localises to the nucleoplasm. The protein resides in the chromosome. The protein localises to the cytoplasm. It catalyses the reaction N(6)-acetyl-L-lysyl-[protein] + NAD(+) + H2O = 2''-O-acetyl-ADP-D-ribose + nicotinamide + L-lysyl-[protein]. It carries out the reaction N(6)-glutaryl-L-lysyl-[protein] + NAD(+) + H2O = 2''-O-glutaryl-ADP-D-ribose + nicotinamide + L-lysyl-[protein]. The catalysed reaction is N(6)-succinyl-L-lysyl-[protein] + NAD(+) + H2O = 2''-O-succinyl-ADP-D-ribose + nicotinamide + L-lysyl-[protein]. The enzyme catalyses N(6)-propanoyl-L-lysyl-[protein] + NAD(+) + H2O = 3''-O-propanoyl-ADP-D-ribose + nicotinamide + L-lysyl-[protein]. It catalyses the reaction N(6)-decanoyl-L-lysyl-[protein] + NAD(+) + H2O = 2''-O-decanoyl-ADP-D-ribose + nicotinamide + L-lysyl-[protein]. Its activity is regulated as follows. NAD-dependent protein-lysine deacetylase and deacylase activities are activated by nucleic acids. Histone deacetylase activity is activated by DNA. Protein-lysine deacylase activity is activated by RNA. H3K18Ac histone deacetylase activity is inhibited by methylation at Arg-390. H3K18Ac histone deacetylase activity is inhibited by deubiquitination by USP7. In terms of biological role, NAD-dependent protein-lysine deacylase that can act both as a deacetylase or deacylase (desuccinylase, depropionylase, deglutarylase and dedecanoylase), depending on the context. Specifically mediates deacetylation of histone H3 at 'Lys-18' (H3K18Ac). In contrast to other histone deacetylases, displays strong preference for a specific histone mark, H3K18Ac, directly linked to control of gene expression. H3K18Ac is mainly present around the transcription start site of genes and has been linked to activation of nuclear hormone receptors; SIRT7 thereby acts as a transcription repressor. Moreover, H3K18 hypoacetylation has been reported as a marker of malignancy in various cancers and seems to maintain the transformed phenotype of cancer cells. Also able to mediate deacetylation of histone H3 at 'Lys-36' (H3K36Ac) in the context of nucleosomes. Also mediates deacetylation of non-histone proteins, such as ATM, CDK9, DDX21, DDB1, FBL, FKBP5/FKBP51, GABPB1, RAN, RRP9/U3-55K and POLR1E/PAF53. Enriched in nucleolus where it stimulates transcription activity of the RNA polymerase I complex. Acts by mediating the deacetylation of the RNA polymerase I subunit POLR1E/PAF53, thereby promoting the association of RNA polymerase I with the rDNA promoter region and coding region. In response to metabolic stress, SIRT7 is released from nucleoli leading to hyperacetylation of POLR1E/PAF53 and decreased RNA polymerase I transcription. Required to restore the transcription of ribosomal RNA (rRNA) at the exit from mitosis. Promotes pre-ribosomal RNA (pre-rRNA) cleavage at the 5'-terminal processing site by mediating deacetylation of RRP9/U3-55K, a core subunit of the U3 snoRNP complex. Mediates 'Lys-37' deacetylation of Ran, thereby regulating the nuclear export of NF-kappa-B subunit RELA/p65. Acts as a regulator of DNA damage repair by mediating deacetylation of ATM during the late stages of DNA damage response, promoting ATM dephosphorylation and deactivation. Suppresses the activity of the DCX (DDB1-CUL4-X-box) E3 ubiquitin-protein ligase complexes by mediating deacetylation of DDB1, which prevents the interaction between DDB1 and CUL4 (CUL4A or CUL4B). Activates RNA polymerase II transcription by mediating deacetylation of CDK9, thereby promoting 'Ser-2' phosphorylation of the C-terminal domain (CTD) of RNA polymerase II. Deacetylates FBL, promoting histone-glutamine methyltransferase activity of FBL. Acts as a regulator of mitochondrial function by catalyzing deacetylation of GABPB1. Regulates Akt/AKT1 activity by mediating deacetylation of FKBP5/FKBP51. Required to prevent R-loop-associated DNA damage and transcription-associated genomic instability by mediating deacetylation and subsequent activation of DDX21, thereby overcoming R-loop-mediated stalling of RNA polymerases. In addition to protein deacetylase activity, also acts as a protein-lysine deacylase. Acts as a protein depropionylase by mediating depropionylation of Osterix (SP7), thereby regulating bone formation by osteoblasts. Acts as a histone deglutarylase by mediating deglutarylation of histone H4 on 'Lys-91' (H4K91glu); a mark that destabilizes nucleosomes by promoting dissociation of the H2A-H2B dimers from nucleosomes. Acts as a histone desuccinylase: in response to DNA damage, recruited to DNA double-strand breaks (DSBs) and catalyzes desuccinylation of histone H3 on 'Lys-122' (H3K122succ), thereby promoting chromatin condensation and DSB repair. Also promotes DSB repair by promoting H3K18Ac deacetylation, regulating non-homologous end joining (NHEJ). Along with its role in DNA repair, required for chromosome synapsis during prophase I of female meiosis by catalyzing H3K18Ac deacetylation. Involved in transcriptional repression of LINE-1 retrotransposon via H3K18Ac deacetylation, and promotes their association with the nuclear lamina. Required to stabilize ribosomal DNA (rDNA) heterochromatin and prevent cellular senescence induced by rDNA instability. Acts as a negative regulator of SIRT1 by preventing autodeacetylation of SIRT1, restricting SIRT1 deacetylase activity. In Rattus norvegicus (Rat), this protein is NAD-dependent protein deacetylase sirtuin-7.